Reading from the N-terminus, the 214-residue chain is Probable transaldolase (214 aa).

The Schiff-base intermediate with substrate role is filled by Lys83.

Belongs to the transaldolase family. Type 3B subfamily.

The protein resides in the cytoplasm. The enzyme catalyses D-sedoheptulose 7-phosphate + D-glyceraldehyde 3-phosphate = D-erythrose 4-phosphate + beta-D-fructose 6-phosphate. It functions in the pathway carbohydrate degradation; pentose phosphate pathway; D-glyceraldehyde 3-phosphate and beta-D-fructose 6-phosphate from D-ribose 5-phosphate and D-xylulose 5-phosphate (non-oxidative stage): step 2/3. Transaldolase is important for the balance of metabolites in the pentose-phosphate pathway. The sequence is that of Probable transaldolase from Brevibacillus brevis (strain 47 / JCM 6285 / NBRC 100599).